Here is a 30-residue protein sequence, read N- to C-terminus: Kalata-B5 (30 aa).

The cyclopeptide (Gly-Asn) cross-link spans 1–30 (GTPCGESCVYIPCISGVIGCSCTDKVCYLN). Cystine bridges form between cysteine 4-cysteine 20, cysteine 8-cysteine 22, and cysteine 13-cysteine 27.

In terms of processing, this is a cyclic peptide.

Its function is as follows. Probably participates in a plant defense mechanism. This chain is Kalata-B5, found in Oldenlandia affinis.